A 105-amino-acid polypeptide reads, in one-letter code: ATP-dependent Clp protease adapter protein ClpS (105 aa).

Belongs to the ClpS family. In terms of assembly, binds to the N-terminal domain of the chaperone ClpA.

Functionally, involved in the modulation of the specificity of the ClpAP-mediated ATP-dependent protein degradation. The protein is ATP-dependent Clp protease adapter protein ClpS of Streptomyces avermitilis (strain ATCC 31267 / DSM 46492 / JCM 5070 / NBRC 14893 / NCIMB 12804 / NRRL 8165 / MA-4680).